The primary structure comprises 160 residues: Ribosomal RNA large subunit methyltransferase H (160 aa).

S-adenosyl-L-methionine contacts are provided by residues Leu-76, Gly-108, and 127-132; that span reads LGKMTW.

This sequence belongs to the RNA methyltransferase RlmH family. As to quaternary structure, homodimer.

The protein resides in the cytoplasm. The catalysed reaction is pseudouridine(1915) in 23S rRNA + S-adenosyl-L-methionine = N(3)-methylpseudouridine(1915) in 23S rRNA + S-adenosyl-L-homocysteine + H(+). Its function is as follows. Specifically methylates the pseudouridine at position 1915 (m3Psi1915) in 23S rRNA. This Rhizobium etli (strain CIAT 652) protein is Ribosomal RNA large subunit methyltransferase H.